The chain runs to 596 residues: Chaperonin 60 subunit beta 2, chloroplastic (596 aa).

A chloroplast-targeting transit peptide spans 1 to 50 (MASTFTATSSLGSLLAPNAIKLSSATSISSSSFGRRHNVCVRRSRPAIVC). Phosphoserine occurs at positions 97 and 474. Residues 388 to 489 (TQEAVNKRVV…KDTLENDEEK (102 aa)) are a coiled coil.

This sequence belongs to the chaperonin (HSP60) family. Part of the Cpn60 complex composed of 7 alpha and 7 beta subunits. Can also form a complex composed of 14 beta subunits only. Both complexes show ATPase activity. The Cpn60 complex interacts with the Cpn10 complex. Interacts with RAB during heat stress.

It is found in the plastid. The protein localises to the chloroplast stroma. Functionally, involved in protein assisted folding. The protein is Chaperonin 60 subunit beta 2, chloroplastic (CPN60B2) of Arabidopsis thaliana (Mouse-ear cress).